The chain runs to 180 residues: ATP synthase subunit b (180 aa).

A helical transmembrane segment spans residues 26-48 (SMILFWKAVNTVILLGLVYYFGG).

Belongs to the ATPase B chain family. As to quaternary structure, F-type ATPases have 2 components, F(1) - the catalytic core - and F(0) - the membrane proton channel. F(1) has five subunits: alpha(3), beta(3), gamma(1), delta(1), epsilon(1). F(0) has three main subunits: a(1), b(2) and c(10-14). The alpha and beta chains form an alternating ring which encloses part of the gamma chain. F(1) is attached to F(0) by a central stalk formed by the gamma and epsilon chains, while a peripheral stalk is formed by the delta and b chains.

The protein resides in the cell inner membrane. Its function is as follows. F(1)F(0) ATP synthase produces ATP from ADP in the presence of a proton or sodium gradient. F-type ATPases consist of two structural domains, F(1) containing the extramembraneous catalytic core and F(0) containing the membrane proton channel, linked together by a central stalk and a peripheral stalk. During catalysis, ATP synthesis in the catalytic domain of F(1) is coupled via a rotary mechanism of the central stalk subunits to proton translocation. Component of the F(0) channel, it forms part of the peripheral stalk, linking F(1) to F(0). This chain is ATP synthase subunit b, found in Sulfurihydrogenibium sp. (strain YO3AOP1).